The chain runs to 657 residues: L-type lectin-domain containing receptor kinase I.8 (657 aa).

The N-terminal stretch at 1–23 (MAPGLDLIWMVISFLLLIHLSSQ) is a signal peptide. Residues 24–282 (QETGFSFNGF…QVPHPKMKTS (259 aa)) are Extracellular-facing. The interval 25 to 257 (ETGFSFNGFR…NHYILGWSFS (233 aa)) is legume-lectin like. N-linked (GlcNAc...) asparagine glycans are attached at residues Asn74, Asn124, Asn181, Asn204, and Asn225. The chain crosses the membrane as a helical span at residues 283 to 303 (LLLILLLIVLGIILLVLLVGA). Topologically, residues 304–657 (YLYRRNKYAE…THSIQYGIGR (354 aa)) are cytoplasmic. The Protein kinase domain maps to 339 to 611 (FHKDGFLGKG…VQYLDRQVSL (273 aa)). ATP is bound by residues 345-353 (LGKGGFGEV) and Lys366. The active-site Proton acceptor is Asp462.

This sequence in the C-terminal section; belongs to the protein kinase superfamily. Ser/Thr protein kinase family. It in the N-terminal section; belongs to the leguminous lectin family.

The protein resides in the cell membrane. The enzyme catalyses L-seryl-[protein] + ATP = O-phospho-L-seryl-[protein] + ADP + H(+). It carries out the reaction L-threonyl-[protein] + ATP = O-phospho-L-threonyl-[protein] + ADP + H(+). In terms of biological role, involved in resistance response to the pathogenic fungus Alternaria brassicicola. The polypeptide is L-type lectin-domain containing receptor kinase I.8 (Arabidopsis thaliana (Mouse-ear cress)).